We begin with the raw amino-acid sequence, 239 residues long: MAMLRTDLEFSMLPKLDSRPVRWRIADGLVAYEEAVVAMEREVAAIAEGGDELVWLVEHPPLYTAGTSANAGDLVQPDRFPVFATGRGGEYTYHGPGQRVAYVMLDLKRRRQDVRAFVAALEEVVIRTLDMMNVRGERREDRVGVWVRRPEKPMLADGTMAEDKIAALGIRLRKWVTFHGLSLNVDPNLDHFSGIVPCGISAYGVTSLVDLGLPVMMADVDIRLRAAFETVFGETVNEP.

Positions Glu-48–Val-236 constitute a BPL/LPL catalytic domain. Substrate contacts are provided by residues Arg-87–His-94, Ala-167–Gly-169, and Gly-180–Ser-182. The Acyl-thioester intermediate role is filled by Cys-198.

Belongs to the LipB family.

Its subcellular location is the cytoplasm. It catalyses the reaction octanoyl-[ACP] + L-lysyl-[protein] = N(6)-octanoyl-L-lysyl-[protein] + holo-[ACP] + H(+). It participates in protein modification; protein lipoylation via endogenous pathway; protein N(6)-(lipoyl)lysine from octanoyl-[acyl-carrier-protein]: step 1/2. Catalyzes the transfer of endogenously produced octanoic acid from octanoyl-acyl-carrier-protein onto the lipoyl domains of lipoate-dependent enzymes. Lipoyl-ACP can also act as a substrate although octanoyl-ACP is likely to be the physiological substrate. This is Octanoyltransferase from Rhizobium etli (strain CIAT 652).